A 368-amino-acid chain; its full sequence is GTPase Obg (368 aa).

Residues 1-161 (MRFVDEATIT…RSLRLELKIL (161 aa)) enclose the Obg domain. The region spanning 162 to 337 (ADAGLLGLPN…VVAEMWRMRD (176 aa)) is the OBG-type G domain. GTP-binding positions include 168–175 (GLPNAGKS), 193–197 (FTTLI), 217–220 (DIPG), 290–293 (NKID), and 318–320 (SAL). Mg(2+) is bound by residues serine 175 and threonine 195.

Belongs to the TRAFAC class OBG-HflX-like GTPase superfamily. OBG GTPase family. In terms of assembly, monomer. Mg(2+) serves as cofactor.

Its subcellular location is the cytoplasm. An essential GTPase which binds GTP, GDP and possibly (p)ppGpp with moderate affinity, with high nucleotide exchange rates and a fairly low GTP hydrolysis rate. Plays a role in control of the cell cycle, stress response, ribosome biogenesis and in those bacteria that undergo differentiation, in morphogenesis control. The sequence is that of GTPase Obg from Nitratidesulfovibrio vulgaris (strain DSM 19637 / Miyazaki F) (Desulfovibrio vulgaris).